Consider the following 124-residue polypeptide: MNNLLLVALGGSIGAVFRYLISIFMIQVFGSSFPFGTLLVNVLGSFLMGVIYALGQMSHISPEFKALIGIGLLGALTTFSTFSNETLLLLQEGDWLKATLNVVLNLSLCLFMVYLGQQLVFSRI.

4 helical membrane passes run 4 to 24, 35 to 55, 60 to 80, and 102 to 122; these read LLLV…ISIF, FGTL…YALG, ISPE…TTFS, and VVLN…LVFS. Residues glycine 74 and threonine 77 each contribute to the Na(+) site.

Belongs to the fluoride channel Fluc/FEX (TC 1.A.43) family.

The protein resides in the cell inner membrane. The enzyme catalyses fluoride(in) = fluoride(out). Its activity is regulated as follows. Na(+) is not transported, but it plays an essential structural role and its presence is essential for fluoride channel function. Fluoride-specific ion channel. Important for reducing fluoride concentration in the cell, thus reducing its toxicity. In Shewanella baltica (strain OS223), this protein is Fluoride-specific ion channel FluC.